Reading from the N-terminus, the 295-residue chain is Phosphatidylserine decarboxylase proenzyme (295 aa).

Residues D113, H169, and S256 each act as charge relay system; for autoendoproteolytic cleavage activity in the active site. S256 acts as the Schiff-base intermediate with substrate; via pyruvic acid; for decarboxylase activity in catalysis. S256 is subject to Pyruvic acid (Ser); by autocatalysis.

It belongs to the phosphatidylserine decarboxylase family. PSD-B subfamily. Prokaryotic type II sub-subfamily. Heterodimer of a large membrane-associated beta subunit and a small pyruvoyl-containing alpha subunit. Requires pyruvate as cofactor. In terms of processing, is synthesized initially as an inactive proenzyme. Formation of the active enzyme involves a self-maturation process in which the active site pyruvoyl group is generated from an internal serine residue via an autocatalytic post-translational modification. Two non-identical subunits are generated from the proenzyme in this reaction, and the pyruvate is formed at the N-terminus of the alpha chain, which is derived from the carboxyl end of the proenzyme. The autoendoproteolytic cleavage occurs by a canonical serine protease mechanism, in which the side chain hydroxyl group of the serine supplies its oxygen atom to form the C-terminus of the beta chain, while the remainder of the serine residue undergoes an oxidative deamination to produce ammonia and the pyruvoyl prosthetic group on the alpha chain. During this reaction, the Ser that is part of the protease active site of the proenzyme becomes the pyruvoyl prosthetic group, which constitutes an essential element of the active site of the mature decarboxylase.

Its subcellular location is the cell membrane. It carries out the reaction a 1,2-diacyl-sn-glycero-3-phospho-L-serine + H(+) = a 1,2-diacyl-sn-glycero-3-phosphoethanolamine + CO2. Its pathway is phospholipid metabolism; phosphatidylethanolamine biosynthesis; phosphatidylethanolamine from CDP-diacylglycerol: step 2/2. In terms of biological role, catalyzes the formation of phosphatidylethanolamine (PtdEtn) from phosphatidylserine (PtdSer). The polypeptide is Phosphatidylserine decarboxylase proenzyme (Clostridium botulinum (strain 657 / Type Ba4)).